An 85-amino-acid chain; its full sequence is MGLIDFLRNKTKTAETAKNRLQIIIAQERTQRGGPDYLPLLQRELLEVIKKYVKIDANAVKVDLIKDGANDVLDISVALPDDSER.

This sequence belongs to the MinE family.

In terms of biological role, prevents the cell division inhibition by proteins MinC and MinD at internal division sites while permitting inhibition at polar sites. This ensures cell division at the proper site by restricting the formation of a division septum at the midpoint of the long axis of the cell. In Xylella fastidiosa (strain M12), this protein is Cell division topological specificity factor.